The sequence spans 263 residues: Pro-opiomelanocortin (263 aa).

Residues 1 to 26 (MLQPVWHACILAILGVFIFHVGEVRS) form the signal peptide. Residue Q27 is modified to Pyrrolidone carboxylic acid. At F87 the chain carries Phenylalanine amide. Residue N91 is glycosylated (N-linked (GlcNAc...) asparagine). Residues 107–141 (EDIANYPILNLFLGSDNQNTQEGIMEDDALDRQDS) constitute a propeptide that is removed on maturation. Valine amide is present on V156.

The protein belongs to the POMC family. Specific enzymatic cleavages at paired basic residues yield the different active peptides.

The protein resides in the secreted. Its function is as follows. Stimulates the adrenal glands to release cortisol. Anorexigenic peptide. Increases the pigmentation of skin by increasing melanin production in melanocytes. In terms of biological role, increases the pigmentation of skin by increasing melanin production in melanocytes. Functionally, endogenous orexigenic opiate. Its function is as follows. Endogenous opiate. This chain is Pro-opiomelanocortin (pomc), found in Aquarana catesbeiana (American bullfrog).